The sequence spans 540 residues: Putative cysteine ligase BshC (540 aa).

Residues 425–453 (IEKVEGMIEQQRRLNKDLLDEVAGNQNNI) are a coiled coil.

It belongs to the BshC family.

In terms of biological role, involved in bacillithiol (BSH) biosynthesis. May catalyze the last step of the pathway, the addition of cysteine to glucosamine malate (GlcN-Mal) to generate BSH. The chain is Putative cysteine ligase BshC from Staphylococcus aureus (strain NCTC 8325 / PS 47).